We begin with the raw amino-acid sequence, 111 residues long: MELLKVAILFAVTAVAEIVGCYLPWLVVKQGKSAWLLLPAAVSLSLFAWLLTLHPTAAGRTYAAYGGMYIAVALVWLHVVDGVALTRWDFVGAAIALAGMSVIALQPATDT.

4 helical membrane-spanning segments follow: residues 8 to 28 (ILFA…WLVV), 33 to 53 (SAWL…LLTL), 65 to 85 (YGGM…GVAL), and 88 to 108 (WDFV…LQPA).

This sequence belongs to the UPF0060 family.

Its subcellular location is the cell inner membrane. This chain is UPF0060 membrane protein Ajs_1473, found in Acidovorax sp. (strain JS42).